The following is a 360-amino-acid chain: Mannose-1-phosphate guanylyltransferase catalytic subunit beta (360 aa).

The segment at 2–222 (KALILVGGYG…QGFWMDIGQP (221 aa)) is substrate-binding domain. Aspartate 110 is a GDP-alpha-D-mannose binding site. Aspartate 110 lines the Mg(2+) pocket. Lysine 162 is a catalytic residue. Aspartate 218 contributes to the GDP-alpha-D-mannose binding site. Aspartate 218 is a Mg(2+) binding site. Residues 245 to 360 (CSGPGIVGNV…ESVPEPRIIM (116 aa)) are hexapeptide repeat domain.

It belongs to the transferase hexapeptide repeat family. Component of the GMPPA-GMPPB mannose-1-phosphate guanylyltransferase complex composed of 4 GMPPA subunits and 8 GMPPB subunits; the complex is organized into three layers, a central layer made up of 2 GMPPA dimers sandwiched between two layers each made up of 2 GMPPB dimers. GMPPB catalytic activity is reduced when part of the complex and binding of GDP-alpha-D-Mannose by GMPPA induces allosteric feedback inhibition of GMPPB. Requires Mg(2+) as cofactor. In terms of tissue distribution, ubiquitously expressed, including in brain and skeletal muscle. As to expression, weakly expressed with highest expression in skeletal muscle, brain and gonads.

The protein localises to the cytoplasm. It catalyses the reaction alpha-D-mannose 1-phosphate + GTP + H(+) = GDP-alpha-D-mannose + diphosphate. It functions in the pathway nucleotide-sugar biosynthesis; GDP-alpha-D-mannose biosynthesis; GDP-alpha-D-mannose from alpha-D-mannose 1-phosphate (GTP route): step 1/1. Its activity is regulated as follows. Enzyme activity is reduced by incorporation into the GMPPA-GMPPB mannose-1-phosphate guanylyltransferase complex. Allosterically inhibited, when part of the GMPPA-GMPPB complex, by GDP-alpha-D-mannose binding to GMPPA. In terms of biological role, catalytic subunit of the GMPPA-GMPPB mannose-1-phosphate guanylyltransferase complex. Catalyzes the formation of GDP-mannose, an essential precursor of glycan moieties of glycoproteins and glycolipids. Can catalyze the reverse reaction in vitro. Together with GMPPA regulates GDP-alpha-D-mannose levels. In Homo sapiens (Human), this protein is Mannose-1-phosphate guanylyltransferase catalytic subunit beta.